The chain runs to 736 residues: Exo-oligoalginate lyase (736 aa).

The N-terminal stretch at 1–23 (MLSVNTIKNTLLAAVLVSVPATA) is a signal peptide. Substrate-binding positions include Lys136, 146 to 149 (QSLN), Lys198, His202, and 257 to 260 (YYQR). The active-site Proton donor is the Tyr258. His413 functions as the Proton acceptor in the catalytic mechanism. Zn(2+)-binding residues include His415 and Asp433. Arg438 lines the substrate pocket. His464 is a binding site for Zn(2+). Glu667 provides a ligand contact to substrate.

Belongs to the polysaccharide lyase 17 family. In terms of assembly, homodimer. It depends on Zn(2+) as a cofactor.

It localises to the periplasm. The catalysed reaction is Cleavage of 4-deoxy-alpha-L-erythro-hex-4-enopyranuronoside oligosaccharides into 4-deoxy-alpha-L-erythro-hex-4-enopyranuronate monosaccharides.. Its function is as follows. Catalyzes the depolymerization of alginate through an exolytic mode of action, via a beta-elimination mechanism. Preferentially acts on oligoalginates with degrees of polymerization higher than 2 to produce the alginate monomer, 4-deoxy-L-erythro-5-hexoseulose uronic acid. In Saccharophagus degradans (strain 2-40 / ATCC 43961 / DSM 17024), this protein is Exo-oligoalginate lyase.